A 225-amino-acid polypeptide reads, in one-letter code: Phosphatidylserine decarboxylase proenzyme (225 aa).

Catalysis depends on S189, which acts as the Schiff-base intermediate with substrate; via pyruvic acid. S189 is modified (pyruvic acid (Ser); by autocatalysis).

It belongs to the phosphatidylserine decarboxylase family. PSD-A subfamily. As to quaternary structure, heterodimer of a large membrane-associated beta subunit and a small pyruvoyl-containing alpha subunit. It depends on pyruvate as a cofactor. In terms of processing, is synthesized initially as an inactive proenzyme. Formation of the active enzyme involves a self-maturation process in which the active site pyruvoyl group is generated from an internal serine residue via an autocatalytic post-translational modification. Two non-identical subunits are generated from the proenzyme in this reaction, and the pyruvate is formed at the N-terminus of the alpha chain, which is derived from the carboxyl end of the proenzyme. The post-translation cleavage follows an unusual pathway, termed non-hydrolytic serinolysis, in which the side chain hydroxyl group of the serine supplies its oxygen atom to form the C-terminus of the beta chain, while the remainder of the serine residue undergoes an oxidative deamination to produce ammonia and the pyruvoyl prosthetic group on the alpha chain.

The protein localises to the cell membrane. It catalyses the reaction a 1,2-diacyl-sn-glycero-3-phospho-L-serine + H(+) = a 1,2-diacyl-sn-glycero-3-phosphoethanolamine + CO2. It participates in phospholipid metabolism; phosphatidylethanolamine biosynthesis; phosphatidylethanolamine from CDP-diacylglycerol: step 2/2. Functionally, catalyzes the formation of phosphatidylethanolamine (PtdEtn) from phosphatidylserine (PtdSer). In Amoebophilus asiaticus (strain 5a2), this protein is Phosphatidylserine decarboxylase proenzyme.